We begin with the raw amino-acid sequence, 128 residues long: Large ribosomal subunit protein bL12 (128 aa).

It belongs to the bacterial ribosomal protein bL12 family. In terms of assembly, homodimer. Part of the ribosomal stalk of the 50S ribosomal subunit. Forms a multimeric L10(L12)X complex, where L10 forms an elongated spine to which 2 to 4 L12 dimers bind in a sequential fashion. Binds GTP-bound translation factors.

Forms part of the ribosomal stalk which helps the ribosome interact with GTP-bound translation factors. Is thus essential for accurate translation. This Thermosipho africanus (strain TCF52B) protein is Large ribosomal subunit protein bL12.